The primary structure comprises 232 residues: Large ribosomal subunit protein uL1 (232 aa).

Belongs to the universal ribosomal protein uL1 family. As to quaternary structure, part of the 50S ribosomal subunit.

In terms of biological role, binds directly to 23S rRNA. The L1 stalk is quite mobile in the ribosome, and is involved in E site tRNA release. Functionally, protein L1 is also a translational repressor protein, it controls the translation of the L11 operon by binding to its mRNA. In Lysinibacillus sphaericus (strain C3-41), this protein is Large ribosomal subunit protein uL1.